A 295-amino-acid chain; its full sequence is ER-localized J domain-containing protein 5 (295 aa).

Positions 1 to 20 (MNGYWKPALVVLGLVSLSYA) are cleaved as a signal peptide. Residues 21 to 130 (FTTIETEIFQ…GFYFSRMKPK (110 aa)) lie on the Lumenal side of the membrane. Residues 42–110 (DMNFYKFLKL…RKIYDYYLQN (69 aa)) enclose the J domain. A helical transmembrane segment spans residues 131 to 151 (TWFLLAFIWIVVNIGQYIISI). Residues 152–295 (IQYRSQRSRI…PNGKVIYSRK (144 aa)) are Cytoplasmic-facing. A disordered region spans residues 259 to 287 (KYDGNQTKKGNKVKKGSAKKGQKKMELPN). The segment covering 267-280 (KGNKVKKGSAKKGQ) has biased composition (basic residues).

The protein belongs to the DnaJ family.

It is found in the endoplasmic reticulum membrane. Functionally, dnaJ-like chaperone required for the folding capacity of the endoplasmic reticulum. The chain is ER-localized J domain-containing protein 5 (ERJ5) from Saccharomyces cerevisiae (strain ATCC 204508 / S288c) (Baker's yeast).